The chain runs to 156 residues: ATP synthase subunit b 1 (156 aa).

Residues 7–29 traverse the membrane as a helical segment; sequence LLGQAISFALFVWFCMKYVWPPL.

This sequence belongs to the ATPase B chain family. As to quaternary structure, F-type ATPases have 2 components, F(1) - the catalytic core - and F(0) - the membrane proton channel. F(1) has five subunits: alpha(3), beta(3), gamma(1), delta(1), epsilon(1). F(0) has three main subunits: a(1), b(2) and c(10-14). The alpha and beta chains form an alternating ring which encloses part of the gamma chain. F(1) is attached to F(0) by a central stalk formed by the gamma and epsilon chains, while a peripheral stalk is formed by the delta and b chains.

Its subcellular location is the cell inner membrane. F(1)F(0) ATP synthase produces ATP from ADP in the presence of a proton or sodium gradient. F-type ATPases consist of two structural domains, F(1) containing the extramembraneous catalytic core and F(0) containing the membrane proton channel, linked together by a central stalk and a peripheral stalk. During catalysis, ATP synthesis in the catalytic domain of F(1) is coupled via a rotary mechanism of the central stalk subunits to proton translocation. In terms of biological role, component of the F(0) channel, it forms part of the peripheral stalk, linking F(1) to F(0). This chain is ATP synthase subunit b 1, found in Vibrio campbellii (strain ATCC BAA-1116).